The following is a 736-amino-acid chain: Na(+)/H(+) antiporter NhaA (736 aa).

The na(+)/H(+) antiporter NhaA stretch occupies residues 1-387; the sequence is MNHSPQSARP…ICGYLLLRAA (387 aa). The next 12 helical transmembrane spans lie at 23–43, 58–78, 96–116, 126–146, 155–175, 178–198, 201–221, 224–244, 265–285, 298–318, 334–354, and 367–387; these read AGGI…NSPF, LSLA…LVGL, MLPG…FAVL, GWAV…SLLG, VFLA…IAIF, AEIS…LFVM, MGVV…FFVF, GVHA…KPAP, VAFI…FKGL, ILLG…WLAI, LYGV…IGLL, and IGVL…LRAA. Residues 388–736 are peptidase S49; it reads RPDQSAANPL…EKAIWARYGL (349 aa).

The protein in the N-terminal section; belongs to the NhaA Na(+)/H(+) (TC 2.A.33) antiporter family. It in the C-terminal section; belongs to the peptidase S49 family.

It localises to the cell inner membrane. The enzyme catalyses Na(+)(in) + 2 H(+)(out) = Na(+)(out) + 2 H(+)(in). In terms of biological role, na(+)/H(+) antiporter that extrudes sodium in exchange for external protons. The protein is Na(+)/H(+) antiporter NhaA of Brucella abortus (strain 2308).